We begin with the raw amino-acid sequence, 583 residues long: Membrane protein insertase YidC (583 aa).

Helical transmembrane passes span 5-25 (SVTGLAIIAVIMIVWLQFMSP), 341-361 (PFAEFIILPVFSWMNGFVSNY), 362-382 (GLIIIIFAFLIKLVTYPLSMA), 427-447 (IGGCLPVVLQMPLLFAMFYVF), 473-493 (FGFAIPMYGSHIAVFPILMAV), and 520-540 (AMMLLFFNNMPAGLGLYYLMF).

It belongs to the OXA1/ALB3/YidC family. Type 1 subfamily. In terms of assembly, interacts with the Sec translocase complex via SecD. Specifically interacts with transmembrane segments of nascent integral membrane proteins during membrane integration.

It localises to the cell inner membrane. Required for the insertion and/or proper folding and/or complex formation of integral membrane proteins into the membrane. Involved in integration of membrane proteins that insert both dependently and independently of the Sec translocase complex, as well as at least some lipoproteins. Aids folding of multispanning membrane proteins. This chain is Membrane protein insertase YidC, found in Pelodictyon phaeoclathratiforme (strain DSM 5477 / BU-1).